Consider the following 447-residue polypeptide: Argininosuccinate synthase (447 aa).

ATP-binding positions include 12 to 20 and A39; that span reads AYSGGLDTS. 2 residues coordinate L-citrulline: Y92 and S97. Residue G122 coordinates ATP. L-aspartate contacts are provided by T124, N128, and D129. Position 128 (N128) interacts with L-citrulline. 5 residues coordinate L-citrulline: R132, S182, S191, E267, and Y279.

Belongs to the argininosuccinate synthase family. Type 1 subfamily. Homotetramer.

It localises to the cytoplasm. The enzyme catalyses L-citrulline + L-aspartate + ATP = 2-(N(omega)-L-arginino)succinate + AMP + diphosphate + H(+). It participates in amino-acid biosynthesis; L-arginine biosynthesis; L-arginine from L-ornithine and carbamoyl phosphate: step 2/3. The polypeptide is Argininosuccinate synthase (Sulfurovum sp. (strain NBC37-1)).